The following is an 81-amino-acid chain: Short neurotoxin 1 (81 aa).

A signal peptide spans 1–21 (MKTLLLTLVVVTIVCLDLGYT). 4 disulfides stabilise this stretch: Cys24-Cys43, Cys38-Cys60, Cys62-Cys73, and Cys74-Cys79.

The protein belongs to the three-finger toxin family. Short-chain subfamily. Type I alpha-neurotoxin sub-subfamily. In terms of tissue distribution, expressed by the venom gland.

It localises to the secreted. Functionally, binds to muscle nicotinic acetylcholine receptor (nAChR) and inhibit acetylcholine from binding to the receptor, thereby impairing neuromuscular transmission. The polypeptide is Short neurotoxin 1 (Hoplocephalus stephensii (Stephens's banded snake)).